Reading from the N-terminus, the 307-residue chain is GMP synthase [glutamine-hydrolyzing] subunit B (307 aa).

Residues 1 to 184 (MWENFIEEKV…LGLPEKIYNR (184 aa)) enclose the GMPS ATP-PPase domain. 27–33 (SGGVDSS) contributes to the ATP binding site.

In terms of assembly, heterodimer composed of a glutamine amidotransferase subunit (A) and a GMP-binding subunit (B).

It catalyses the reaction XMP + L-glutamine + ATP + H2O = GMP + L-glutamate + AMP + diphosphate + 2 H(+). It participates in purine metabolism; GMP biosynthesis; GMP from XMP (L-Gln route): step 1/1. In terms of biological role, catalyzes the synthesis of GMP from XMP. The protein is GMP synthase [glutamine-hydrolyzing] subunit B of Thermococcus kodakarensis (strain ATCC BAA-918 / JCM 12380 / KOD1) (Pyrococcus kodakaraensis (strain KOD1)).